Consider the following 321-residue polypeptide: Probable arabinan endo-1,5-alpha-L-arabinosidase C (321 aa).

The first 18 residues, 1-18, serve as a signal peptide directing secretion; that stretch reads MYLYTLILLFLASANVNA. Residue D33 is the Proton acceptor of the active site. N-linked (GlcNAc...) asparagine glycosylation occurs at N192. The Proton donor role is filled by E200. The N-linked (GlcNAc...) asparagine glycan is linked to N224.

The protein belongs to the glycosyl hydrolase 43 family.

The protein resides in the secreted. It catalyses the reaction Endohydrolysis of (1-&gt;5)-alpha-arabinofuranosidic linkages in (1-&gt;5)-arabinans.. It participates in glycan metabolism; L-arabinan degradation. In terms of biological role, endo-1,5-alpha-L-arabinanase involved in degradation of pectin. Its preferred substrate is linear 1,5-alpha-L-arabinan. The chain is Probable arabinan endo-1,5-alpha-L-arabinosidase C (abnC) from Aspergillus fumigatus (strain ATCC MYA-4609 / CBS 101355 / FGSC A1100 / Af293) (Neosartorya fumigata).